A 539-amino-acid chain; its full sequence is Chaperonin GroEL 1 (539 aa).

ATP is bound by residues 30-33 (TLGP), lysine 51, 87-91 (DGTTT), glycine 415, 480-482 (NAA), and aspartate 496.

Belongs to the chaperonin (HSP60) family. Forms a cylinder of 14 subunits composed of two heptameric rings stacked back-to-back. Interacts with the co-chaperonin GroES.

Its subcellular location is the cytoplasm. The enzyme catalyses ATP + H2O + a folded polypeptide = ADP + phosphate + an unfolded polypeptide.. In terms of biological role, together with its co-chaperonin GroES, plays an essential role in assisting protein folding. The GroEL-GroES system forms a nano-cage that allows encapsulation of the non-native substrate proteins and provides a physical environment optimized to promote and accelerate protein folding. The chain is Chaperonin GroEL 1 from Erythrobacter litoralis (strain HTCC2594).